A 188-amino-acid chain; its full sequence is MKHKVGILGGTFDPPHLAHLRMAEEAKKQLGLEKILFLPNKIPPHKHISGMASSDERVEMLQLMIEGIDSFEIDTRELMRTGKSYTYDTMRDMISEQPDTDFYFIIGGDMVEYLPKWYHIDDLVKMVTFVGVNRPSYQTEVPYDIVKINMPETTISSTEIRNNIENASTFLPEKVWSYIKEHQLYGKK.

It belongs to the NadD family.

It catalyses the reaction nicotinate beta-D-ribonucleotide + ATP + H(+) = deamido-NAD(+) + diphosphate. The protein operates within cofactor biosynthesis; NAD(+) biosynthesis; deamido-NAD(+) from nicotinate D-ribonucleotide: step 1/1. In terms of biological role, catalyzes the reversible adenylation of nicotinate mononucleotide (NaMN) to nicotinic acid adenine dinucleotide (NaAD). This is Probable nicotinate-nucleotide adenylyltransferase from Listeria monocytogenes serotype 4a (strain HCC23).